The following is a 337-amino-acid chain: GTPase Obg (337 aa).

The Obg domain occupies 1 to 158; sequence MFIDEVRILV…KRLRLELKLL (158 aa). 2 stretches are compositionally biased toward basic and acidic residues: residues 61 to 74 and 137 to 146; these read NPEH…HGEG and PTEHEPGRPG. Disordered regions lie at residues 61–83 and 119–146; these read NPEH…AEGR and GGRG…GRPG. Residues 159–330 enclose the OBG-type G domain; sequence ADVGLVGFPN…LKHAMADRVL (172 aa). GTP-binding positions include 165–172, 190–194, 212–215, 282–285, and 311–313; these read GFPNAGKS, FTTLE, DIPG, TKMD, and SSA. Ser-172 and Thr-192 together coordinate Mg(2+).

It belongs to the TRAFAC class OBG-HflX-like GTPase superfamily. OBG GTPase family. As to quaternary structure, monomer. It depends on Mg(2+) as a cofactor.

Its subcellular location is the cytoplasm. An essential GTPase which binds GTP, GDP and possibly (p)ppGpp with moderate affinity, with high nucleotide exchange rates and a fairly low GTP hydrolysis rate. Plays a role in control of the cell cycle, stress response, ribosome biogenesis and in those bacteria that undergo differentiation, in morphogenesis control. The protein is GTPase Obg of Solibacter usitatus (strain Ellin6076).